Reading from the N-terminus, the 1101-residue chain is ATP-citrate synthase (1101 aa).

The region spanning 4 to 265 (KAISEQTGKE…LDAKSGASLK (262 aa)) is the ATP-grasp domain. Residues Lys-58, Arg-66, Gly-67, Pro-109, Val-111, and Glu-118 each contribute to the ATP site. A Phosphotyrosine modification is found at Tyr-131. An ATP-binding site is contributed by Asp-216. Asp-257, Ser-260, and Ala-262 together coordinate Mg(2+). Ser-263 is modified (phosphoserine). Residues Gly-309, Asn-346, Thr-348, Tyr-364, and Arg-379 each coordinate citrate. The segment covering 441 to 457 (ASGSTSTPAPSRTASFS) has biased composition (low complexity). A disordered region spans residues 441 to 487 (ASGSTSTPAPSRTASFSESRADEVAPAKKAKPAMPQDSVPSPRSLQG). Phosphothreonine is present on Thr-447. At Ser-451 the chain carries Phosphoserine. Ser-455 is subject to Phosphoserine; by PKA and PKB/AKT1 or PKB/AKT2 or BCKDK. Phosphoserine is present on residues Ser-459 and Ser-481. The span at 478–487 (SVPSPRSLQG) shows a compositional bias: polar residues. An N6-acetyllysine; alternate mark is found at Lys-540, Lys-546, and Lys-554. Glycyl lysine isopeptide (Lys-Gly) (interchain with G-Cter in ubiquitin); alternate cross-links involve residues Lys-540, Lys-546, and Lys-554. The residue at position 639 (Thr-639) is a Phosphothreonine. Phosphoserine is present on Ser-663. Phosphotyrosine is present on Tyr-682. The Tele-phosphohistidine intermediate role is filled by His-760. Residue 779–789 (LKEAGVFVPRS) coordinates CoA. Residue Ser-839 is modified to Phosphoserine. An N6-acetyllysine mark is found at Lys-948, Lys-968, Lys-978, and Lys-1077. The residue at position 1100 (Ser-1100) is a Phosphoserine.

In the N-terminal section; belongs to the succinate/malate CoA ligase beta subunit family. The protein in the C-terminal section; belongs to the succinate/malate CoA ligase alpha subunit family. Homotetramer. It depends on Mg(2+) as a cofactor. Post-translationally, phosphorylated by PKA and GSK3 in a sequential manner; phosphorylation results in activation of its activity. Phosphorylation on Thr-447 and Ser-451 depends on the phosphorylation state of Ser-455. Phosphorylation on Ser-455 is decreased by prior phosphorylation on the other 2 residues. Phosphorylated at Ser-455 by BCKDK and dephosphorylated by protein phosphatase PPM1K. ISGylated. In terms of processing, acetylated at Lys-540, Lys-546 and Lys-554 by KAT2B/PCAF. Acetylation is promoted by glucose and stabilizes the protein, probably by preventing ubiquitination at the same sites. Acetylation promotes de novo lipid synthesis. Deacetylated by SIRT2. Post-translationally, ubiquitinated at Lys-540, Lys-546 and Lys-554 by the BCR(KLHL25) E3 ubiquitin ligase complex and UBR4, leading to its degradation. Ubiquitination is probably inhibited by acetylation at same site. BCR(KLHL25)-mediated degradation of ACLY promotes fatty acid oxidation and is required for differentiation of inducible regulatory T (iTreg) cells.

The protein localises to the cytoplasm. The protein resides in the cytosol. The enzyme catalyses oxaloacetate + acetyl-CoA + ADP + phosphate = citrate + ATP + CoA. Phosphorylation results in activation of its activity. Glucose 6-phosphate, fructose 6-phosphate, fructose 2,6-bisphosphate, ribulose 5-phosphate, and fructose 1,6-bisphosphate also act as activators. In terms of biological role, catalyzes the cleavage of citrate into oxaloacetate and acetyl-CoA, the latter serving as common substrate in multiple biochemical reactions in protein, carbohydrate and lipid metabolism. The sequence is that of ATP-citrate synthase (ACLY) from Homo sapiens (Human).